The chain runs to 430 residues: Histidine--tRNA ligase (430 aa).

This sequence belongs to the class-II aminoacyl-tRNA synthetase family. Homodimer.

It localises to the cytoplasm. It carries out the reaction tRNA(His) + L-histidine + ATP = L-histidyl-tRNA(His) + AMP + diphosphate + H(+). This is Histidine--tRNA ligase from Synechococcus sp. (strain CC9902).